A 766-amino-acid chain; its full sequence is LPS-assembly protein LptD (766 aa).

Positions 1 to 18 (MQIRYFLALSLLPNIVLA) are cleaved as a signal peptide.

It belongs to the LptD family. Component of the lipopolysaccharide transport and assembly complex. Interacts with LptE and LptA.

It is found in the cell outer membrane. Functionally, together with LptE, is involved in the assembly of lipopolysaccharide (LPS) at the surface of the outer membrane. This chain is LPS-assembly protein LptD, found in Shewanella frigidimarina (strain NCIMB 400).